Reading from the N-terminus, the 508-residue chain is GTPase Obg (508 aa).

Positions 2-159 (ARFVDRVVLH…HDVILELKSM (158 aa)) constitute an Obg domain. The region spanning 160-341 (ADIGLVGFPS…LKYAMLDLVQ (182 aa)) is the OBG-type G domain. Residues 166 to 173 (GFPSAGKS), 191 to 195 (FTTLQ), 212 to 215 (DVPG), 292 to 295 (NKAD), and 322 to 324 (SAV) each bind GTP. Residues S173 and T193 each coordinate Mg(2+). The 81-residue stretch at 364–444 (DARKKNKDFE…IGEVSFEWEP (81 aa)) folds into the OCT domain.

The protein belongs to the TRAFAC class OBG-HflX-like GTPase superfamily. OBG GTPase family. Monomer. The cofactor is Mg(2+).

The protein resides in the cytoplasm. Its function is as follows. An essential GTPase which binds GTP, GDP and possibly (p)ppGpp with moderate affinity, with high nucleotide exchange rates and a fairly low GTP hydrolysis rate. Plays a role in control of the cell cycle, stress response, ribosome biogenesis and in those bacteria that undergo differentiation, in morphogenesis control. This is GTPase Obg from Corynebacterium diphtheriae (strain ATCC 700971 / NCTC 13129 / Biotype gravis).